The sequence spans 79 residues: MAKLSFLSLFLLCLVATATAQNCGRQAGNRACANGLCCSQYGFCGSTSEYCSRANGCQSNCRGGGGAGGAGGGAGGGSP.

The first 20 residues, 1–20, serve as a signal peptide directing secretion; sequence MAKLSFLSLFLLCLVATATA. In terms of domain architecture, Chitin-binding type-1 spans 21–63; it reads QNCGRQAGNRACANGLCCSQYGFCGSTSEYCSRANGCQSNCRG. 4 disulfide bridges follow: C23–C38, C32–C44, C37–C51, and C57–C61. Positions 64-79 are excised as a propeptide; the sequence is GGGAGGAGGGAGGGSP.

In terms of tissue distribution, leaves (at protein level).

Chitin-binding protein which functions in defense against chitin-containing fungal pathogens. This is Morintide mO2 from Moringa oleifera (Horseradish tree).